The sequence spans 250 residues: Probable aquaporin TIP1-1 (250 aa).

The next 2 helical transmembrane spans lie at 25 to 44 (AEFI…GMAF) and 58 to 77 (LIAA…SVGA). The NPA 1 motif lies at 85–87 (NPA). Transmembrane regions (helical) follow at residues 103 to 121 (GLLY…CFLL), 144 to 163 (LVLE…ATAV), and 170 to 192 (LGTI…GGAF). An NPA 2 motif is present at residues 198–200 (NPA). The helical transmembrane segment at 216-233 (WVYWVGPLIGGGLAGVIY) threads the bilayer.

The protein belongs to the MIP/aquaporin (TC 1.A.8) family. TIP (TC 1.A.8.10) subfamily. As to expression, expressed in roots and leaves.

The protein resides in the vacuole membrane. Aquaporins facilitate the transport of water and small neutral solutes across cell membranes. May be involved in transport from the vacuolar compartment to the cytoplasm. The protein is Probable aquaporin TIP1-1 (TIP1-1) of Oryza sativa subsp. japonica (Rice).